A 498-amino-acid polypeptide reads, in one-letter code: ATP synthase subunit beta, chloroplastic (498 aa).

An ATP-binding site is contributed by 172 to 179 (GGAGVGKT).

This sequence belongs to the ATPase alpha/beta chains family. As to quaternary structure, F-type ATPases have 2 components, CF(1) - the catalytic core - and CF(0) - the membrane proton channel. CF(1) has five subunits: alpha(3), beta(3), gamma(1), delta(1), epsilon(1). CF(0) has four main subunits: a(1), b(1), b'(1) and c(9-12).

The protein resides in the plastid. The protein localises to the chloroplast thylakoid membrane. The catalysed reaction is ATP + H2O + 4 H(+)(in) = ADP + phosphate + 5 H(+)(out). In terms of biological role, produces ATP from ADP in the presence of a proton gradient across the membrane. The catalytic sites are hosted primarily by the beta subunits. The chain is ATP synthase subunit beta, chloroplastic from Balaka seemannii.